A 296-amino-acid chain; its full sequence is 4-hydroxy-tetrahydrodipicolinate synthase (296 aa).

T49 serves as a coordination point for pyruvate. Y137 acts as the Proton donor/acceptor in catalysis. K165 acts as the Schiff-base intermediate with substrate in catalysis. V207 contributes to the pyruvate binding site.

This sequence belongs to the DapA family. As to quaternary structure, homotetramer; dimer of dimers.

The protein resides in the cytoplasm. The catalysed reaction is L-aspartate 4-semialdehyde + pyruvate = (2S,4S)-4-hydroxy-2,3,4,5-tetrahydrodipicolinate + H2O + H(+). The protein operates within amino-acid biosynthesis; L-lysine biosynthesis via DAP pathway; (S)-tetrahydrodipicolinate from L-aspartate: step 3/4. Functionally, catalyzes the condensation of (S)-aspartate-beta-semialdehyde [(S)-ASA] and pyruvate to 4-hydroxy-tetrahydrodipicolinate (HTPA). This Nitrobacter hamburgensis (strain DSM 10229 / NCIMB 13809 / X14) protein is 4-hydroxy-tetrahydrodipicolinate synthase.